A 109-amino-acid polypeptide reads, in one-letter code: MFGKGGLGNLMKQAQQMQEKMQQMQEEVAKLEVTGESGAGLVKVTINGAHNCRRVEIDPSLMEDDKDMLEDLIAAAINDAARRIDETQKEKMASVSNGMQLPPGFKMPF.

2 disordered regions span residues 1 to 21 and 90 to 109; these read MFGK…QEKM and EKMA…KMPF. The span at 11-21 shows a compositional bias: low complexity; the sequence is MKQAQQMQEKM.

This sequence belongs to the YbaB/EbfC family. In terms of assembly, homodimer.

It is found in the cytoplasm. It localises to the nucleoid. In terms of biological role, binds to DNA and alters its conformation. May be involved in regulation of gene expression, nucleoid organization and DNA protection. The polypeptide is Nucleoid-associated protein Spro_1136 (Serratia proteamaculans (strain 568)).